The sequence spans 319 residues: MKPENKLPVLDLISAEMKTVVNTLQPDLPSWPATGTIAEQRQYYTLERRFWNAGAPEMATRAYMVPTKYGQVETRLFCPQPDSPATLFYLHGGGFILGNLDTHDRIMRLLASYSQCTVIGINYTLSPEARFPQAIEEIVAACCYFHQQAEDYQINMSRIGFAGDSAGAMLALASALWLRDKQIDCGKIAGVLLWYGLYGLRDSVTRRLLGGAWDGLTQQDLQMYEEAYLSNDADRESPYYCLFNNDLTREVPPCFIAGAEFDPLLDDSRLLYQTLAAHQQPCEFKLYPGTLHAFLHYSRMMKTADEALRDGAQFFTAQL.

Positions 91–93 (HGG) match the Involved in the stabilization of the negatively charged intermediate by the formation of the oxyanion hole motif. Residues S165, D262, and H292 contribute to the active site.

It belongs to the 'GDXG' lipolytic enzyme family. Homodimer. Interacts with MalT and MelA.

It localises to the cytoplasm. Its function is as follows. Displays esterase activity towards short chain fatty esters (acyl chain length of up to 8 carbons). Able to hydrolyze triacetylglycerol (triacetin) and tributyrylglycerol (tributyrin), but not trioleylglycerol (triolein) or cholesterol oleate. Negatively regulates MalT activity by antagonizing maltotriose binding. Inhibits MelA galactosidase activity. This Shigella flexneri serotype 5b (strain 8401) protein is Acetyl esterase.